The chain runs to 215 residues: Putative O-methyltransferase MAB_1361c (215 aa).

Residues valine 42, glutamate 64, 66-67, serine 72, aspartate 90, and valine 91 contribute to the S-adenosyl-L-methionine site; that span reads GT. Aspartate 138 serves as a coordination point for substrate.

The protein belongs to the class I-like SAM-binding methyltransferase superfamily. Cation-dependent O-methyltransferase family.

The chain is Putative O-methyltransferase MAB_1361c from Mycobacteroides abscessus (strain ATCC 19977 / DSM 44196 / CCUG 20993 / CIP 104536 / JCM 13569 / NCTC 13031 / TMC 1543 / L948) (Mycobacterium abscessus).